Consider the following 208-residue polypeptide: 3-isopropylmalate dehydratase small subunit (208 aa).

It belongs to the LeuD family. LeuD type 1 subfamily. In terms of assembly, heterodimer of LeuC and LeuD.

It carries out the reaction (2R,3S)-3-isopropylmalate = (2S)-2-isopropylmalate. It participates in amino-acid biosynthesis; L-leucine biosynthesis; L-leucine from 3-methyl-2-oxobutanoate: step 2/4. In terms of biological role, catalyzes the isomerization between 2-isopropylmalate and 3-isopropylmalate, via the formation of 2-isopropylmaleate. This chain is 3-isopropylmalate dehydratase small subunit, found in Granulibacter bethesdensis (strain ATCC BAA-1260 / CGDNIH1).